A 1031-amino-acid chain; its full sequence is uncharacterized protein (1031 aa).

The SWIM-type zinc finger occupies 50 to 85 (FKVQINLKTAAAHLDCSCSNDKQNCVHIIAALLKYN). The region spanning 590 to 751 (RALEDNQFGG…WSCFDFVLPN (162 aa)) is the Helicase ATP-binding domain. 603–610 (DEMGLGKT) contributes to the ATP binding site. The DEAQ box signature appears at 702-705 (DEAQ). Residues 868–1022 (ALNIIYEALE…EDVNFFKSLS (155 aa)) enclose the Helicase C-terminal domain.

The protein belongs to the SNF2/RAD54 helicase family.

This is an uncharacterized protein from Mycoplasma genitalium (strain ATCC 33530 / DSM 19775 / NCTC 10195 / G37) (Mycoplasmoides genitalium).